A 623-amino-acid chain; its full sequence is Glutathione import ATP-binding protein GsiA (623 aa).

ABC transporter domains lie at 15–269 and 314–564; these read VENL…RALL and LRVR…RKLL. Residues 49–56 and 357–364 each bind ATP; these read GESGSGKS.

It belongs to the ABC transporter superfamily. Glutathione importer (TC 3.A.1.5.11) family. The complex is composed of two ATP-binding proteins (GsiA), two transmembrane proteins (GsiC and GsiD) and a solute-binding protein (GsiB).

The protein localises to the cell inner membrane. It catalyses the reaction glutathione(out) + ATP + H2O = glutathione(in) + ADP + phosphate + H(+). Functionally, part of the ABC transporter complex GsiABCD involved in glutathione import. Responsible for energy coupling to the transport system. The sequence is that of Glutathione import ATP-binding protein GsiA from Shigella dysenteriae serotype 1 (strain Sd197).